A 577-amino-acid chain; its full sequence is MAPISLSEIISALPSEDSWGPTTTSETTLNGVPYAPYSKGDKLGRMADWTAEGKDGRDGRGGRQQYNRNYRDQQVYGAGTSSLFAVQLAEDESTFSVVSNTRDSTKTRFGRGGTFTRGRGQRGGRADTRGGRGQFQRVGGRGGQQGYSSYDTRGGRGGARGGRKFGWKDYDKPQRNRDASVNIKPDWKMLEEIDFNRLAKLNLDTDDGEDIDSYGFLYYYDRAFDKQPVKAAERKLNVVDRASYNVTTSSDPVIQELAEKDEATIFATDSILSMLMCSPRSVYPWDIVIVRQGNKVFLDKRDNATLDMVTVNENAADAPMDASEGSKDAINQPSALAEEATYINHNFANQVMKESDSQKVEMEHENPFYNPSEETDPPASKAYKYRKFDLSLNDEDPVHLVVRTEIDAVSKNAISGEDQYLTVKALNEFDSKAQGSGGALDWRTKLVSQRGAVVATEMKNNSCKLARWTVQSIIAKADVMKLGFVSRANPKLNDRHVILGVIGWKPRDFASQMNLSLSNGWGIVRTIVDMCLKREEGKYVLVKDPNKPILRLYQVPAGSFEDDGEGDVIEENVEEED.

Residues 103-177 (DSTKTRFGRG…KDYDKPQRNR (75 aa)) are disordered. The segment covering 166–177 (GWKDYDKPQRNR) has biased composition (basic and acidic residues). Residues 305–319 (TLDMVTVNENAADAP) form an RNA gate region. The segment at 558 to 577 (GSFEDDGEGDVIEENVEEED) is disordered. Residues 560–577 (FEDDGEGDVIEENVEEED) are compositionally biased toward acidic residues.

The protein belongs to the eIF-3 subunit D family. In terms of assembly, component of the eukaryotic translation initiation factor 3 (eIF-3) complex.

It is found in the cytoplasm. In terms of biological role, mRNA cap-binding component of the eukaryotic translation initiation factor 3 (eIF-3) complex, which is involved in protein synthesis of a specialized repertoire of mRNAs and, together with other initiation factors, stimulates binding of mRNA and methionyl-tRNAi to the 40S ribosome. The eIF-3 complex specifically targets and initiates translation of a subset of mRNAs involved in cell proliferation. In the eIF-3 complex, eif3d specifically recognizes and binds the 7-methylguanosine cap of a subset of mRNAs. The protein is Eukaryotic translation initiation factor 3 subunit D of Sclerotinia sclerotiorum (strain ATCC 18683 / 1980 / Ss-1) (White mold).